The chain runs to 799 residues: MAHRLPTRWDIKWEEELLKLWEKEGRFKTKISGSRPVFVIDTPPPYLSSNRPHIGQTASYAHFDMIARFLRMRGVDVIFPFYLDRNGLPIEVQVEKKYGVVAHEIPREKFIKMCKEELDSYEGEFVSSLRRWGLSFDYWPNGTDSPEYRRMTQKTFIELWHKGLVYEAERPTPWCPRCRTALAEPEIEYREEETYLNYIKFKVKETGEDIIIATTRPELLPATVAVIFHPDDSRYTRLNGMHAVVPPEGQVVPILPHKAANPNFGSGLVMISTFGDTRDLMIVNELKLPIRIIIDEGGRIKTGKYAGVSIREARAKIIEDLKNAGLLVKQERLVHNVPVCWRCKTPLEIIVTRELFIKQIEFKEKLIELAGKMEFKPPEYRQVLIDWIKSLELDWPVSRRRYYATEIPIWWCAKPNGERVPLLPKGGEYYVPWRDEPPPEVKEACKDGRLEGDTRVFDTWFDSSISWMYASGVTKDFNAFSKVYPHSIMRPQGYDIIRTWLYYSLLRAYLLYGDVPFRYVRINGMGLDEKGEAMHKSKGNVIDLLAPVEKYGADPVRFWAAAAGRLGTDYRYNENVIREGKEFLTKVWNISRFVLSFPEPQQKPQLAPVDRALLARLYDVAKKVITAYSEFDVYEPAHALYNFIWHEFADHYIELVKSRAYNREGVFTEEEQRAAIWTLYTAWRYSLKLLAPIMPFVTDKIWREAYGRSIHDEMIEDPPEEWKEGDQALFHLVKKINSAVWRYKNRRGMSLADRLDAVLYVSELAMQAAKDLKYMHKVSDVRPGRGAEQIDDEGLVWLG.

Lysine 536 is a binding site for ATP.

Belongs to the class-I aminoacyl-tRNA synthetase family. ValS type 2 subfamily.

The protein resides in the cytoplasm. It carries out the reaction tRNA(Val) + L-valine + ATP = L-valyl-tRNA(Val) + AMP + diphosphate. Catalyzes the attachment of valine to tRNA(Val). As ValRS can inadvertently accommodate and process structurally similar amino acids such as threonine, to avoid such errors, it has a 'posttransfer' editing activity that hydrolyzes mischarged Thr-tRNA(Val) in a tRNA-dependent manner. The protein is Valine--tRNA ligase (valS) of Pyrobaculum aerophilum (strain ATCC 51768 / DSM 7523 / JCM 9630 / CIP 104966 / NBRC 100827 / IM2).